The following is a 289-amino-acid chain: mRNA-capping enzyme small subunit (289 aa).

Heterodimer of a large and a small subunit.

The protein resides in the virion. The catalysed reaction is a 5'-end (5'-triphosphoguanosine)-ribonucleoside in mRNA + S-adenosyl-L-methionine = a 5'-end (N(7)-methyl 5'-triphosphoguanosine)-ribonucleoside in mRNA + S-adenosyl-L-homocysteine. Functionally, catalyzes the last reaction in the mRNA cap formation pathway. The sequence is that of mRNA-capping enzyme small subunit from Fowlpox virus (strain NVSL) (FPV).